The following is a 367-amino-acid chain: Flagellar P-ring protein (367 aa).

The N-terminal stretch at 1–22 (MRRMLVIRWILAIHLIATQVFA) is a signal peptide.

It belongs to the FlgI family. As to quaternary structure, the basal body constitutes a major portion of the flagellar organelle and consists of four rings (L,P,S, and M) mounted on a central rod.

The protein resides in the periplasm. Its subcellular location is the bacterial flagellum basal body. In terms of biological role, assembles around the rod to form the L-ring and probably protects the motor/basal body from shearing forces during rotation. The sequence is that of Flagellar P-ring protein from Legionella pneumophila subsp. pneumophila (strain Philadelphia 1 / ATCC 33152 / DSM 7513).